Consider the following 86-residue polypeptide: Small ribosomal subunit protein bS16 (86 aa).

It belongs to the bacterial ribosomal protein bS16 family.

This is Small ribosomal subunit protein bS16 from Xylella fastidiosa (strain M23).